A 235-amino-acid polypeptide reads, in one-letter code: MTIRLVIVEPEGAYNLGFIARLVKNFLIDEFYVVNPKCDINEAIKFSAKGSEVIEKMMKITNNFDDAIRDVDLKIATSSIADIKGDLLRKSIRPIDLERLIKDKKVAFIFGRESVGLTREEIAKSDFLLFIPANPEYPVLNLSHAVGIVLYELWRNRDNKVPTVSSEPIKLIDDYSKKITDILVNKEATKSMYLVLKRVLIKGIEDNEEAMTIVRILRKIYVRLAKKENESDKLL.

S-adenosyl-L-methionine-binding positions include 77 to 79 (TSS), glycine 111, isoleucine 131, and 138 to 140 (PVL).

The protein belongs to the class IV-like SAM-binding methyltransferase superfamily. RNA methyltransferase TrmH family. Homodimer.

It is found in the cytoplasm. It carries out the reaction cytidine(32) in tRNA + S-adenosyl-L-methionine = 2'-O-methylcytidine(32) in tRNA + S-adenosyl-L-homocysteine + H(+). In terms of biological role, catalyzes the formation of 2'O-methylated cytidine (Cm32) at position 32 in tRNA. Is specific for cytidine. This chain is tRNA (cytidine-2'-O-)-methyltransferase TrmJ, found in Sulfolobus acidocaldarius (strain ATCC 33909 / DSM 639 / JCM 8929 / NBRC 15157 / NCIMB 11770).